Reading from the N-terminus, the 418-residue chain is UDP-N-acetylglucosamine 1-carboxyvinyltransferase (418 aa).

A phosphoenolpyruvate-binding site is contributed by 22–23 (KN). Position 91 (arginine 91) interacts with UDP-N-acetyl-alpha-D-glucosamine. Cysteine 115 (proton donor) is an active-site residue. Cysteine 115 is subject to 2-(S-cysteinyl)pyruvic acid O-phosphothioketal. UDP-N-acetyl-alpha-D-glucosamine is bound by residues aspartate 303 and isoleucine 325.

It belongs to the EPSP synthase family. MurA subfamily.

The protein resides in the cytoplasm. It carries out the reaction phosphoenolpyruvate + UDP-N-acetyl-alpha-D-glucosamine = UDP-N-acetyl-3-O-(1-carboxyvinyl)-alpha-D-glucosamine + phosphate. It participates in cell wall biogenesis; peptidoglycan biosynthesis. Its function is as follows. Cell wall formation. Adds enolpyruvyl to UDP-N-acetylglucosamine. This Syntrophobacter fumaroxidans (strain DSM 10017 / MPOB) protein is UDP-N-acetylglucosamine 1-carboxyvinyltransferase.